A 287-amino-acid chain; its full sequence is Uricase (287 aa).

Catalysis depends on charge relay system residues lysine 11 and threonine 58. Positions 58, 59, 160, 177, 219, 220, and 246 each coordinate urate. Residue histidine 248 is the Charge relay system of the active site. The Microbody targeting signal motif lies at 285-287 (SRL).

It belongs to the uricase family.

It is found in the peroxisome. It catalyses the reaction urate + O2 + H2O = 5-hydroxyisourate + H2O2. The protein operates within purine metabolism; urate degradation; (S)-allantoin from urate: step 1/3. Catalyzes the oxidation of uric acid to 5-hydroxyisourate, which is further processed to form (S)-allantoin. The polypeptide is Uricase (uox) (Dictyostelium discoideum (Social amoeba)).